Consider the following 121-residue polypeptide: Large ribosomal subunit protein bL19 (121 aa).

Belongs to the bacterial ribosomal protein bL19 family.

This protein is located at the 30S-50S ribosomal subunit interface and may play a role in the structure and function of the aminoacyl-tRNA binding site. The sequence is that of Large ribosomal subunit protein bL19 from Chlorobium phaeovibrioides (strain DSM 265 / 1930) (Prosthecochloris vibrioformis (strain DSM 265)).